A 479-amino-acid chain; its full sequence is MSDVTIVKEGWVQKRGEYIKNWRPRYFLLKTDGSFIGYKEKPQDVDLPYPLNNFSVAKCQLMKTERPKPNTFIIRCLQWTTVIERTFHVDTPEEREEWTEAIQAVADRLQRQEEERMNCSPTSQIDNIGEEEMDASTTHHKRKTMNDFDYLKLLGKGTFGKVILVREKASGKYYAMKILKKEVIIAKDEVAHTLTESRVLKNTRHPFLTSLKYSFQTKDRLCFVMEYVNGGELFFHLSRERVFSEDRTRFYGAEIVSALDYLHSGKIVYRDLKLENLMLDKDGHIKITDFGLCKEGITDAATMKTFCGTPEYLAPEVLEDNDYGRAVDWWGLGVVMYEMMCGRLPFYNQDHEKLFELILMEDIKFPRTLSSDAKSLLSGLLIKDPNKRLGGGPDDAKEIMRHSFFSGVNWQDVYDKKLVPPFKPQVTSETDTRYFDEEFTAQTITITPPEKYDEDGMDCMDNERRPHFPQFSYSASGRE.

Serine 2 bears the N-acetylserine mark. A PH domain is found at 5–107 (TIVKEGWVQK…WTEAIQAVAD (103 aa)). A disulfide bridge links cysteine 59 with cysteine 76. The region spanning 148 to 405 (FDYLKLLGKG…AKEIMRHSFF (258 aa)) is the Protein kinase domain. ATP is bound by residues 154–162 (LGKGTFGKV) and lysine 177. Aspartate 271 functions as the Proton acceptor in the catalytic mechanism. Cysteines 293 and 307 form a disulfide. O-linked (GlcNAc) threonine glycosylation occurs at threonine 302. Threonine 305 carries the phosphothreonine; by PDPK1 modification. O-linked (GlcNAc) threonine glycosylation is present at threonine 309. Positions 406 to 479 (SGVNWQDVYD…QFSYSASGRE (74 aa)) constitute an AGC-kinase C-terminal domain. Phosphothreonine is present on threonine 447. Residues 458–479 (DCMDNERRPHFPQFSYSASGRE) form a disordered region. Serine 472 bears the Phosphoserine; by PKC/PRKCZ mark. An O-linked (GlcNAc) serine; alternate glycan is attached at serine 472.

Belongs to the protein kinase superfamily. AGC Ser/Thr protein kinase family. RAC subfamily. Interacts (via PH domain) with TCL1A; this enhances AKT3 phosphorylation and activation. Interacts with TRAF6. Interacts with KCTD20. Interacts with BTBD10. Phosphorylation on Thr-305 and Ser-472 is required for full activity. Phosphorylation of the activation loop at Thr-305 by PDPK1/PDK1 is a prerequisite for full activation. Phosphorylation at Ser-472 by mTORC2 in response to growth factors plays a key role in AKT1 activation by facilitating subsequent phosphorylation of the activation loop by PDPK1/PDK1. Post-translationally, ubiquitinated. When fully phosphorylated and translocated into the nucleus, undergoes 'Lys-48'-polyubiquitination catalyzed by TTC3, leading to its degradation by the proteasome. In terms of processing, O-GlcNAcylation at Thr-302 and Thr-309 inhibits activating phosphorylation at Thr-305 via disrupting the interaction between AKT and PDPK1/PDK1. In terms of tissue distribution, in adult tissues, it is highly expressed in brain, lung and kidney, but weakly in heart, testis and liver. In fetal tissues, it is highly expressed in heart, liver and brain and not at all in kidney.

The protein localises to the nucleus. Its subcellular location is the cytoplasm. It is found in the membrane. It carries out the reaction L-seryl-[protein] + ATP = O-phospho-L-seryl-[protein] + ADP + H(+). The enzyme catalyses L-threonyl-[protein] + ATP = O-phospho-L-threonyl-[protein] + ADP + H(+). With respect to regulation, two specific sites, one in the kinase domain (Thr-305) and the other in the C-terminal regulatory region (Ser-472), need to be phosphorylated for its full activation. IGF-1 leads to the activation of AKT3, which may play a role in regulating cell survival. AKT3 is one of 3 closely related serine/threonine-protein kinases (AKT1, AKT2 and AKT3) called the AKT kinase, and which regulate many processes including metabolism, proliferation, cell survival, growth and angiogenesis. This is mediated through serine and/or threonine phosphorylation of a range of downstream substrates. Over 100 substrate candidates have been reported so far, but for most of them, no isoform specificity has been reported. AKT3 is the least studied AKT isoform. It plays an important role in brain development and is crucial for the viability of malignant glioma cells. AKT3 isoform may also be the key molecule in up-regulation and down-regulation of MMP13 via IL13. Required for the coordination of mitochondrial biogenesis with growth factor-induced increases in cellular energy demands. Down-regulation by RNA interference reduces the expression of the phosphorylated form of BAD, resulting in the induction of caspase-dependent apoptosis. This is RAC-gamma serine/threonine-protein kinase (AKT3) from Homo sapiens (Human).